We begin with the raw amino-acid sequence, 584 residues long: Levansucrase (584 aa).

Positions 1 to 30 (MAHVRRKVATLNMALAGSLLMVLGAQSALA) are cleaved as a signal peptide. At Gln-31 the chain carries Pyrrolidone carboxylic acid. Residues Trp-134, Asp-135, Ser-225, Arg-308, and Asp-309 each coordinate sucrose. Catalysis depends on Asp-135, which acts as the Nucleophile. A disulfide bridge connects residues Cys-339 and Cys-395. Glu-401 (proton donor/acceptor) is an active-site residue.

It belongs to the glycosyl hydrolase 68 family. As to quaternary structure, monomer. The N-terminus is blocked. The N-terminal Gln is cyclized to a pyroglutamic acid.

The protein localises to the secreted. The catalysed reaction is [6)-beta-D-fructofuranosyl-(2-&gt;](n) alpha-D-glucopyranoside + sucrose = [6)-beta-D-fructofuranosyl-(2-&gt;](n+1) alpha-D-glucopyranoside + D-glucose. With respect to regulation, strongly inhibited by Hg(2+) and slightly activated by Co(2+). Not inhibited by the metal ion chelator EDTA, suggesting that this enzyme does not need a metal cofactor. Functionally, catalyzes the synthesis of levan, a fructose polymer, by transferring the fructosyl moiety from sucrose to a growing acceptor molecule. Also displays sucrose hydrolase activity. In vitro, catalyzes transfructosylation from sucrose to a variety of acceptors including water (sucrose hydrolysis), glucose (exchange reaction), fructan (polymerase reaction) and sucrose (oligofructoside synthesis). Levansucrase of G.diazotrophicus SRT4, unlike the enzyme of B.subtilis, causes accumulation of large quantities of tri- and tetrasaccharides but small quantities of high-molecular-mass levan. It may act more as a sucrose hydrolase than as a fructan polymerase, and may be the key enzyme in the sucrose metabolism of G.diazotrophicus SRT4. This is Levansucrase from Gluconacetobacter diazotrophicus (Acetobacter diazotrophicus).